The sequence spans 149 residues: Nucleoside diphosphate kinase (149 aa).

Lys11, Phe59, Arg87, Thr93, Arg104, and Asn114 together coordinate ATP. His117 (pros-phosphohistidine intermediate) is an active-site residue.

Belongs to the NDK family. Homotetramer. It depends on Mg(2+) as a cofactor.

It localises to the cytoplasm. The catalysed reaction is a 2'-deoxyribonucleoside 5'-diphosphate + ATP = a 2'-deoxyribonucleoside 5'-triphosphate + ADP. It carries out the reaction a ribonucleoside 5'-diphosphate + ATP = a ribonucleoside 5'-triphosphate + ADP. Major role in the synthesis of nucleoside triphosphates other than ATP. The ATP gamma phosphate is transferred to the NDP beta phosphate via a ping-pong mechanism, using a phosphorylated active-site intermediate. This is Nucleoside diphosphate kinase from Treponema pallidum (strain Nichols).